Reading from the N-terminus, the 144-residue chain is Ferredoxin-thioredoxin reductase catalytic chain, chloroplastic (144 aa).

Residues 1–31 constitute a chloroplast transit peptide; the sequence is MKALQASIAYSFPISSPAASPRRFSRVIRAQ. Cys83 contributes to the [4Fe-4S] cluster binding site. Cys85 serves as the catalytic Nucleophile. Cys85 and Cys115 are disulfide-bonded. Cys102, Cys104, and Cys113 together coordinate [4Fe-4S] cluster.

It belongs to the ferredoxin thioredoxin reductase beta subunit family. Heterodimer of subunit A (variable subunit) and subunit B (catalytic subunit). Heterodimeric FTR forms a complex with ferredoxin and thioredoxin. Requires [4Fe-4S] cluster as cofactor.

The protein resides in the plastid. It is found in the chloroplast. It carries out the reaction [thioredoxin]-disulfide + 2 reduced [2Fe-2S]-[ferredoxin] + 2 H(+) = [thioredoxin]-dithiol + 2 oxidized [2Fe-2S]-[ferredoxin]. Functionally, catalytic subunit of the ferredoxin-thioredoxin reductase (FTR), which catalyzes the two-electron reduction of thioredoxins by the electrons provided by reduced ferredoxin. The polypeptide is Ferredoxin-thioredoxin reductase catalytic chain, chloroplastic (FTRC) (Spinacia oleracea (Spinach)).